The primary structure comprises 268 residues: Probable ribosomal RNA small subunit methyltransferase A (268 aa).

6 residues coordinate S-adenosyl-L-methionine: H23, L25, G50, E71, D95, and N110.

Belongs to the class I-like SAM-binding methyltransferase superfamily. rRNA adenine N(6)-methyltransferase family. RsmA subfamily.

The protein localises to the cytoplasm. Its function is as follows. Specifically dimethylates two adjacent adenosines in the loop of a conserved hairpin near the 3'-end of 16S rRNA in the 30S particle. May play a critical role in biogenesis of 30S subunits. This is Probable ribosomal RNA small subunit methyltransferase A from Pyrococcus horikoshii (strain ATCC 700860 / DSM 12428 / JCM 9974 / NBRC 100139 / OT-3).